A 230-amino-acid chain; its full sequence is Ion-translocating oxidoreductase complex subunit E (230 aa).

Residues 1-17 (MSENRTLMLNGMWNNNP) are Cytoplasmic-facing. 2 helical membrane-spanning segments follow: residues 18 to 38 (ALVQ…VTNA) and 39 to 59 (LGLG…VSLV). At 60 to 68 (RDYVPKEVR) the chain is on the cytoplasmic side. Residues 69 to 89 (IPVFVMIIASLVTCVQLLMNA) traverse the membrane as a helical segment. Residues 90 to 92 (YAY) lie on the Periplasmic side of the membrane. The chain crosses the membrane as a helical span at residues 93 to 113 (GLYLSLGIFIPLIVTNCIIIG). At 114–123 (RAEAFASKND) the chain is on the cytoplasmic side. A helical membrane pass occupies residues 124 to 144 (VLPAALDGFWMGLGMTSVLVV). Residues 145-181 (LGSLREIIGNGTLFDGADLLLGEWAKVLRIEVFHFDS) lie on the Periplasmic side of the membrane. Residues 182 to 202 (AFLLALLPPGAFIGVGFLIAA) traverse the membrane as a helical segment. The Cytoplasmic portion of the chain corresponds to 203-230 (KSVIDKQIAARQPKQQKQAIERARVTNV).

This sequence belongs to the NqrDE/RnfAE family. As to quaternary structure, the complex is composed of six subunits: RnfA, RnfB, RnfC, RnfD, RnfE and RnfG.

The protein localises to the cell inner membrane. Part of a membrane-bound complex that couples electron transfer with translocation of ions across the membrane. In Vibrio cholerae serotype O1 (strain ATCC 39541 / Classical Ogawa 395 / O395), this protein is Ion-translocating oxidoreductase complex subunit E.